We begin with the raw amino-acid sequence, 92 residues long: YcgL domain-containing protein Shewmr7_2249 (92 aa).

In terms of domain architecture, YcgL spans M1–R85.

The polypeptide is YcgL domain-containing protein Shewmr7_2249 (Shewanella sp. (strain MR-7)).